The chain runs to 147 residues: Large ribosomal subunit protein uL13 (147 aa).

Belongs to the universal ribosomal protein uL13 family. As to quaternary structure, part of the 50S ribosomal subunit.

Its function is as follows. This protein is one of the early assembly proteins of the 50S ribosomal subunit, although it is not seen to bind rRNA by itself. It is important during the early stages of 50S assembly. This Leuconostoc mesenteroides subsp. mesenteroides (strain ATCC 8293 / DSM 20343 / BCRC 11652 / CCM 1803 / JCM 6124 / NCDO 523 / NBRC 100496 / NCIMB 8023 / NCTC 12954 / NRRL B-1118 / 37Y) protein is Large ribosomal subunit protein uL13.